The primary structure comprises 466 residues: Phytase A (466 aa).

An N-terminal signal peptide occupies residues 1–19; that stretch reads MAVLSVLLPITFLLSSVTG. Cysteine 30 and cysteine 39 form a disulfide bridge. 6 residues coordinate 1D-myo-inositol hexakisphosphate: glutamine 49, tyrosine 50, arginine 80, histidine 81, arginine 84, and threonine 87. 4 disulfides stabilise this stretch: cysteine 70/cysteine 413, cysteine 214/cysteine 464, cysteine 263/cysteine 281, and cysteine 435/cysteine 443. Histidine 81 acts as the Nucleophile in catalysis. Residues asparagine 104 and asparagine 119 are each glycosylated (N-linked (GlcNAc...) asparagine). Arginine 164 is a binding site for 1D-myo-inositol hexakisphosphate. 2 N-linked (GlcNAc...) asparagine glycosylation sites follow: asparagine 206 and asparagine 219. A 1D-myo-inositol hexakisphosphate-binding site is contributed by lysine 300. N-linked (GlcNAc...) asparagine glycans are attached at residues asparagine 338 and asparagine 351. Residues histidine 360 and aspartate 361 each contribute to the 1D-myo-inositol hexakisphosphate site. N-linked (GlcNAc...) asparagine glycosylation is present at asparagine 375.

It belongs to the histidine acid phosphatase family. In terms of assembly, monomer.

It is found in the secreted. It catalyses the reaction 1D-myo-inositol hexakisphosphate + H2O = 1D-myo-inositol 1,2,4,5,6-pentakisphosphate + phosphate. The catalysed reaction is 1D-myo-inositol 1,2,4,5,6-pentakisphosphate + H2O = 1D-myo-inositol 1,2,5,6-tetrakisphosphate + phosphate. The enzyme catalyses 1D-myo-inositol 1,2,5,6-tetrakisphosphate + H2O = 1D-myo-inositol 1,2,6-trisphosphate + phosphate. It carries out the reaction 1D-myo-inositol 1,2,6-trisphosphate + H2O = 1D-myo-inositol 1,2-bisphosphate + phosphate. It catalyses the reaction 1D-myo-inositol 1,2-bisphosphate + H2O = 1D-myo-inositol 2-phosphate + phosphate. Functionally, catalyzes the phosphate monoester hydrolysis of phytic acid (myo-inositol hexakisphosphate), which results in the stepwise formation of myo-inositol pentakis-, tetrakis-, tris-, bis-, and monophosphates, as well as the liberation of inorganic phosphate. Myo-inositol 2-monophosphate is the end product. This chain is Phytase A (phyA), found in Aspergillus oryzae (strain ATCC 42149 / RIB 40) (Yellow koji mold).